The following is a 731-amino-acid chain: Catalase-peroxidase 2 (731 aa).

The span at 1–10 (MAETPNSDMS) shows a compositional bias: polar residues. The segment at 1-26 (MAETPNSDMSGATGGRSKRPKSNQDW) is disordered. The segment at residues 95–218 (WHSAGTYRTA…LGASVMGLIY (124 aa)) is a cross-link (tryptophyl-tyrosyl-methioninium (Trp-Tyr) (with M-244)). H96 acts as the Proton acceptor in catalysis. The tryptophyl-tyrosyl-methioninium (Tyr-Met) (with W-95) cross-link spans 218–244 (YVNPEGPDGNPDPEASAKNIRQTFDRM). H259 lines the heme b pocket.

As to quaternary structure, homodimer. Heme b serves as cofactor. Post-translationally, formation of the three residue Trp-Tyr-Met cross-link is important for the catalase, but not the peroxidase activity of the enzyme.

It catalyses the reaction H2O2 + AH2 = A + 2 H2O. The catalysed reaction is 2 H2O2 = O2 + 2 H2O. In terms of biological role, bifunctional enzyme with both catalase and broad-spectrum peroxidase activity. This Haloarcula marismortui (strain ATCC 43049 / DSM 3752 / JCM 8966 / VKM B-1809) (Halobacterium marismortui) protein is Catalase-peroxidase 2.